Reading from the N-terminus, the 282-residue chain is Acyl-CoA-binding domain-containing protein 6 (282 aa).

The tract at residues 1–31 (MASSFLPAGAITGDSGGELSSGDDSGEVEFP) is disordered. One can recognise an ACB domain in the interval 42–127 (LAELFEKAAA…VKKLDPGWNP (86 aa)). An acyl-CoA is bound by residues 69 to 73 (YARYK) and lysine 95. A Phosphoserine modification is found at serine 106. Tyrosine 114 provides a ligand contact to an acyl-CoA. 2 ANK repeats span residues 191–220 (EGRA…DINC) and 224–253 (EGQT…DPTL).

Monomer. As to expression, detected in placenta and spleen (at protein level). Detected in placenta, umbilical cord blood, CD34-positive hematopoietic progenitor cells and bone marrow.

It is found in the cytoplasm. It localises to the nucleus. Binds long-chain acyl-coenzyme A molecules with a strong preference for unsaturated C18:1-CoA, lower affinity for unsaturated C20:4-CoA, and very weak affinity for saturated C16:0-CoA. Does not bind fatty acids. Plays a role in protein N-myristoylation. The chain is Acyl-CoA-binding domain-containing protein 6 (ACBD6) from Homo sapiens (Human).